The following is a 131-amino-acid chain: Calvin cycle protein CP12-2, chloroplastic (131 aa).

A chloroplast-targeting transit peptide spans 1–53; sequence MATIATGLNIATQRVFVTSENRPVCLAGPVHLNNSWNLGSRTTNRMMKLQPIK. 2 cysteine pairs are disulfide-bonded: cysteine 75–cysteine 84 and cysteine 117–cysteine 126. The disordered stretch occupies residues 97–131; sequence AASHARDKKKADGSDPLEEYCKDNPETNECRTYDN. Positions 105–131 are enriched in basic and acidic residues; that stretch reads KKADGSDPLEEYCKDNPETNECRTYDN.

It belongs to the CP12 family. As to quaternary structure, monomer. Component of a complex that contains two dimers of PRK, two tetramers of GAPDH and CP12. CP12 associates with GAPDH, causing its conformation to change. This GAPDH/CP12 complex binds PRK to form a half-complex (one unit). This unit probably dimerizes due partially to interactions between the enzymes of each unit. Contains two disulfide bonds; only the oxidized protein, with two disulfide bonds, is active in complex formation. The C-terminal disulfide is involved in the interaction with GAPDH and the N-terminal disulfide mediates the binding of PRK with this binary complex. In terms of tissue distribution, mostly expressed in cotyledons, leaves and flower stalks, and, to a lower extent, in flowers and stems. Barely detectable in roots and siliques.

It is found in the plastid. The protein resides in the chloroplast. Acts as a linker essential in the assembly of a core complex of PRK/GAPDH. Coordinates the reversible inactivation of chloroplast enzymes GAPDH and PRK during darkness in photosynthetic tissues. The sequence is that of Calvin cycle protein CP12-2, chloroplastic (CP12-2) from Arabidopsis thaliana (Mouse-ear cress).